A 101-amino-acid chain; its full sequence is Urease subunit beta 1 (101 aa).

This sequence belongs to the urease beta subunit family. Heterotrimer of UreA (gamma), UreB (beta) and UreC (alpha) subunits. Three heterotrimers associate to form the active enzyme.

The protein resides in the cytoplasm. It catalyses the reaction urea + 2 H2O + H(+) = hydrogencarbonate + 2 NH4(+). It participates in nitrogen metabolism; urea degradation; CO(2) and NH(3) from urea (urease route): step 1/1. Functionally, disruption of the ure1 gene cluster suggests that it protects brucellae during their passage through the stomach. The major route of infection in human brucellosis is oral. This is Urease subunit beta 1 from Brucella abortus (strain 2308).